The following is a 1724-amino-acid chain: Protein scribble homolog (1724 aa).

Residues 1 to 821 (MLKCIPLWRC…MTVLRERMVE (821 aa)) form a sufficient for targeting to adherens junction region. LRR repeat units follow at residues 11-34 (NRHV…IYRY), 35-58 (NRSL…FFRL), 59-81 (HNLR…VANF), 83-105 (QLVE…KFCQ), 107-127 (LEIA…FTQL), 128-150 (RGLA…IGNL), 151-174 (SNLV…SFLV), 176-196 (LEQL…LGAL), 197-219 (PNLR…LGNL), 221-242 (QLVC…ISGL), 244-265 (ALTD…IGSL), 266-288 (KKLS…IGEC), 289-311 (ENLT…LGKL), 312-334 (KKLT…LGGC), 336-357 (SLNV…LANA), 359-380 (ELHV…LANL), and 382-405 (LKAM…DDEQ). 3 disordered regions span residues 451-484 (RDDS…LKVM), 496-620 (YTAR…RKDT), and 646-683 (SHDG…HTPF). Low complexity predominate over residues 518 to 534 (SNQSHDSQASSSTTSAT). Residues 554–567 (VQEEEDLDEMEVEY) are compositionally biased toward acidic residues. Basic and acidic residues predominate over residues 574–583 (FAEEPIIRGG). Residues 584–598 (DEDDDYDNDDDDAER) show a composition bias toward acidic residues. The segment covering 611-620 (EKQRLIRKDT) has biased composition (basic and acidic residues). The span at 661–678 (RDGEDDEEEEEDEDEEDD) shows a compositional bias: acidic residues. PDZ domains are found at residues 731–818 (TLSI…LRER), 867–955 (ATCL…DREQ), 1005–1094 (EVTL…RRDP), and 1101–1193 (EIVI…CDGF). The segment at 955 to 995 (QSSVGGASPRTRPHSPPPPEPSDSPEQEDGGDEHLGNHLNC) is disordered. Disordered regions lie at residues 1283–1407 (LQKV…DRQK), 1414–1433 (KQQT…EDDL), 1449–1468 (REFM…AKQV), and 1488–1555 (SLGS…GESA). Basic and acidic residues predominate over residues 1295 to 1306 (FRIDSPVRDAAH). Polar residues-rich tracts occupy residues 1308-1329 (PHNS…NAST), 1346-1357 (PASQDGHSSPNP), and 1364-1385 (PINS…KQPS). Residues 1395-1407 (HSPEQRSFKDRQK) are compositionally biased toward basic and acidic residues. Residues 1430-1461 (EDDLKKMKEEEAKRIEQRAREFMLDEDEEEEE) adopt a coiled-coil conformation. The segment covering 1453-1463 (LDEDEEEEEED) has biased composition (acidic residues). Over residues 1490–1506 (GSPTSRQCATPPNYSAT) the composition is skewed to polar residues. Over residues 1507–1518 (PPSHCGSSGPSS) the composition is skewed to low complexity. Residues 1521–1538 (GKGDSQRNSVEDSFRLEQ) show a composition bias toward basic and acidic residues. Ser1609 carries the phosphoserine modification. The disordered stretch occupies residues 1621–1684 (IAKSKEGKKR…FMDESSSNAV (64 aa)). A compositionally biased stretch (basic and acidic residues) spans 1623 to 1632 (KSKEGKKRGT).

Palmitoylated.

The protein localises to the cell membrane. Its subcellular location is the cell junction. The protein resides in the adherens junction. It is found in the cell projection. It localises to the lamellipodium. The protein localises to the cytoplasm. Its subcellular location is the postsynapse. The protein resides in the presynapse. In terms of biological role, scaffold protein involved in different aspects of polarized cells differentiation regulating epithelial and neuronal morphogenesis. Regulates the caudal migration of the nVII motor neurons. Required for convergent extension movements during gastrulation. This is Protein scribble homolog (scrib) from Danio rerio (Zebrafish).